The chain runs to 258 residues: Acyl-[acyl-carrier-protein]--UDP-N-acetylglucosamine O-acyltransferase (258 aa).

This sequence belongs to the transferase hexapeptide repeat family. LpxA subfamily. Homotrimer.

Its subcellular location is the cytoplasm. It carries out the reaction a (3R)-hydroxyacyl-[ACP] + UDP-N-acetyl-alpha-D-glucosamine = a UDP-3-O-[(3R)-3-hydroxyacyl]-N-acetyl-alpha-D-glucosamine + holo-[ACP]. The protein operates within glycolipid biosynthesis; lipid IV(A) biosynthesis; lipid IV(A) from (3R)-3-hydroxytetradecanoyl-[acyl-carrier-protein] and UDP-N-acetyl-alpha-D-glucosamine: step 1/6. Its function is as follows. Involved in the biosynthesis of lipid A, a phosphorylated glycolipid that anchors the lipopolysaccharide to the outer membrane of the cell. The chain is Acyl-[acyl-carrier-protein]--UDP-N-acetylglucosamine O-acyltransferase from Neisseria meningitidis serogroup C / serotype 2a (strain ATCC 700532 / DSM 15464 / FAM18).